We begin with the raw amino-acid sequence, 194 residues long: Small ribosomal subunit protein eS7 (194 aa).

Belongs to the eukaryotic ribosomal protein eS7 family.

The polypeptide is Small ribosomal subunit protein eS7 (RpS7) (Drosophila yakuba (Fruit fly)).